The following is a 256-amino-acid chain: Hydroxyacylglutathione hydrolase (256 aa).

Zn(2+) is bound by residues His55, His57, Asp59, His60, His113, Asp130, and His168.

The protein belongs to the metallo-beta-lactamase superfamily. Glyoxalase II family. Monomer. Zn(2+) serves as cofactor.

The enzyme catalyses an S-(2-hydroxyacyl)glutathione + H2O = a 2-hydroxy carboxylate + glutathione + H(+). It participates in secondary metabolite metabolism; methylglyoxal degradation; (R)-lactate from methylglyoxal: step 2/2. Thiolesterase that catalyzes the hydrolysis of S-D-lactoyl-glutathione to form glutathione and D-lactic acid. This Alkalilimnicola ehrlichii (strain ATCC BAA-1101 / DSM 17681 / MLHE-1) protein is Hydroxyacylglutathione hydrolase.